A 415-amino-acid chain; its full sequence is Fructose-like permease IIC component (415 aa).

The Cytoplasmic portion of the chain corresponds to methionine 1–methionine 46. The 381-residue stretch at leucine 35–leucine 415 folds into the PTS EIIC type-2 domain. The chain crosses the membrane as a helical span at residues valine 47–tryptophan 67. Residues leucine 68 to serine 101 are Periplasmic-facing. The helical transmembrane segment at phenylalanine 102–isoleucine 122 threads the bilayer. The Cytoplasmic portion of the chain corresponds to glycine 123–leucine 126. Residues alanine 127 to phenylalanine 147 traverse the membrane as a helical segment. The Periplasmic segment spans residues aspartate 148–serine 157. A helical transmembrane segment spans residues serine 158–valine 178. Topologically, residues lysine 179 to threonine 197 are cytoplasmic. The helical transmembrane segment at phenylalanine 198–proline 218 threads the bilayer. The Periplasmic portion of the chain corresponds to phenylalanine 219–lysine 237. The chain crosses the membrane as a helical span at residues glycine 238–isoleucine 258. The Cytoplasmic portion of the chain corresponds to asparagine 259–proline 276. The helical transmembrane segment at valine 277 to isoleucine 297 threads the bilayer. The Periplasmic portion of the chain corresponds to aspartate 298–alanine 318. Residues methionine 319 to isoleucine 339 form a helical membrane-spanning segment. Residues threonine 340–alanine 341 are Cytoplasmic-facing. A helical membrane pass occupies residues isoleucine 342 to valine 362. Topologically, residues glutamine 363–asparagine 378 are periplasmic. The chain crosses the membrane as a helical span at residues leucine 379–phenylalanine 399. Topologically, residues leucine 400 to leucine 415 are cytoplasmic.

It localises to the cell inner membrane. The phosphoenolpyruvate-dependent sugar phosphotransferase system (PTS), a major carbohydrate active -transport system, catalyzes the phosphorylation of incoming sugar substrates concomitant with their translocation across the cell membrane. This is Fructose-like permease IIC component (fryC) from Escherichia coli O6:H1 (strain CFT073 / ATCC 700928 / UPEC).